Reading from the N-terminus, the 173-residue chain is Small ribosomal subunit protein uS11m (173 aa).

Belongs to the universal ribosomal protein uS11 family.

It is found in the mitochondrion. This is Small ribosomal subunit protein uS11m (RPS11) from Acanthamoeba castellanii (Amoeba).